The following is a 46-amino-acid chain: MQVLNSLRNAKQRHPDCQIVKRKGRLYVICKTNPRFKAVQGRKKRR.

Belongs to the bacterial ribosomal protein bL36 family.

This Salmonella agona (strain SL483) protein is Large ribosomal subunit protein bL36.